The primary structure comprises 370 residues: Ubiquitin carboxyl-terminal hydrolase 12 (370 aa).

The short motif at 1-4 (MEIL) is the Required for plasma membrane localization of USP12/WDR20 element. The region spanning 39–369 (FGLVNFGNTC…SGYILFYQSR (331 aa)) is the USP domain. Residue C48 is the Nucleophile of the active site. A disordered region spans residues 145 to 169 (KQEKQNGRLPNGNIDNENNNSTPDP). The segment covering 157 to 168 (NIDNENNNSTPD) has biased composition (polar residues). Residues C186, C189, C233, and C236 each coordinate Zn(2+). Residue H317 is the Proton acceptor of the active site.

The protein belongs to the peptidase C19 family. USP12/USP46 subfamily. Interacts with WDR48. Interacts with WDR20; this interaction promotes translocation of the USP12 complex to the plasma membrane. Component of the USP12-WDR20-WDR48 deubiquitinating complex. Component of the USP12-DMWD-WDR48 deubiquitinating complex. Interacts with PHLPP1. Interacts with RBPJ. Interacts with CBP; this interaction blocks the acetyltransferase activity of CREBBP. Interacts with ITCH; the interaction is more efficient when both USP12 and WDR48/UAF1 are involved and may mediate recruitment of the USP12 deubiquitinating complex to Notch. Interacts with OPTN and SQSTM1/p62; the interaction is independent of deubiquitinase activity and may be involved in regulation of autophagic flux. In terms of assembly, (Microbial infection) Interacts with Epstein-Barr virus protein EBNA3.

Its subcellular location is the nucleus. The protein localises to the cytoplasm. The protein resides in the cell membrane. The catalysed reaction is Thiol-dependent hydrolysis of ester, thioester, amide, peptide and isopeptide bonds formed by the C-terminal Gly of ubiquitin (a 76-residue protein attached to proteins as an intracellular targeting signal).. Activated by interaction with WDR20, WDR48 and DMWD through different allosteric mechanisms. In terms of biological role, deubiquitinating enzyme that plays various roles in the regulation of the immune response and inflammation. During TCR engagement and activation, translocates into the cytoplasm and deubiquitinates its substrates LAT and TRAT1 and prevents their lysosome-dependent degradation to stabilize the TCR signaling complex at the plasma membrane. Plays an essential role in the selective LPS-induced macrophage response through the activation of NF-kappa-B pathway. In addition, promotes that antiviral immune response through targeting DNA sensor IFI16 to inhibit its proteasome-dependent degradation. Participates in the interferon signaling pathway and antiviral response independently of its deubiquitinase activity by maintaining nuclear phosphorylated STAT1 levels via inhibition of its CREBBP-mediated acetylation and subsequent dephosphorylation. Plays an intrinsic role in promoting the differentiation, activation and proliferation of CD4(+) T-cell by activating the NF-kappa-B signaling pathway through deubiquitinating and stabilizing B-cell lymphoma/leukemia 10/BCL10. In myeloid-derived suppressor cells promotes the activation of the NF-kappa-B via deubiquitination and stabilization of RELA. Regulates the 'Lys-63'-linked polyubiquitin chains of BAX and thereby modulates the mitochondrial apoptotic process. Negative regulator of NOTCH signaling that specifically deubiquitinates non-activated NOTCH receptors to target them for lysosomal degradation; deubiquitination of NOTCH stimulates its transport form late endosomes to lysosomes. Protects neurons against HTT/huntingtin-induced polyglutamine expansion-dependent neurodegeneration through regulation of autophagic flux. This function is independent of deubiquitinase activity or of other components of the USP12-WDR20-WDR48 deubiquitinating complex. In complex with WDR48, acts as a potential tumor suppressor by positively regulating PHLPP1 stability. Functionally, (Microbial infection) Forms a complex with Epstein-Barr virus protein EBNA3 which is an active deubiquitinase activity that may select specific substrates to promote B-lymphocyte transformation. The sequence is that of Ubiquitin carboxyl-terminal hydrolase 12 (USP12) from Homo sapiens (Human).